A 1117-amino-acid polypeptide reads, in one-letter code: WD repeat and HMG-box DNA-binding protein 1 (1117 aa).

WD repeat units lie at residues 11–50, 52–91, 93–131, 134–173, 184–223, 228–267, and 271–310; these read GHTEGHTEVCFDDSGSYIVTCGSDGDVRMWEDLDDDDPKS, NVGEKAFSCALKNGKLVTAVSNNTVQVYTFPEGVPDGILT, FTTNANHVVFNGAGNKIAAGSSDFLVKVVDVMDNSQQQT, GHDAPVLSLSFDPKDIFLASASCDGTVRVWNISDQTCAVS, VNAKSICRLAWQPKAGKLLAVPVEKSVKLYRRETWSNPFD, SISQTLNIVTWSPCGQYLAAGAINGLIVVWNVETKDCMER, and EKGYAICGLAWHPTCSRICYTDVEGNLGVLENVCDLSGKV. Phosphoserine is present on residues Ser333 and Ser377. Lys390 participates in a covalent cross-link: Glycyl lysine isopeptide (Lys-Gly) (interchain with G-Cter in SUMO2). Residue Lys664 is modified to N6-acetyllysine. Positions 816–885 are disordered; that stretch reads LAETQSEEEK…NLFQSANSSD (70 aa). Position 819 is a phosphothreonine (Thr819). Ser821 is modified (phosphoserine). The span at 861 to 872 shows a compositional bias: basic and acidic residues; it reads DTVSEEKPESHN. Residues 873–885 are compositionally biased toward polar residues; that stretch reads HGQNLFQSANSSD. A phosphoserine mark is found at Ser910 and Ser923. Residues 911-1005 form a disordered region; sequence SKEPAVSANS…AVCLQNSENQ (95 aa). Positions 917–943 are enriched in polar residues; the sequence is SANSTRSANILDSMNKSSRKSTSLNRM. Lys953 carries the post-translational modification N6-acetyllysine. Positions 962 to 974 are enriched in polar residues; the sequence is KQASAASYFQKRT. Residues 975–987 are compositionally biased toward basic and acidic residues; the sequence is PQADKTEEVKENP. Positions 988–1004 are enriched in polar residues; that stretch reads KSSSSDAPAVCLQNSEN. The HMG box DNA-binding region spans 1004–1073; that stretch reads NQRPKTGFQM…SDGAEAKKRK (70 aa). Ser1030 carries the phosphoserine modification. The disordered stretch occupies residues 1054–1074; the sequence is WTNKAKGETASDGAEAKKRKR. A Glycyl lysine isopeptide (Lys-Gly) (interchain with G-Cter in SUMO1); alternate cross-link involves residue Lys1116. Lys1116 is covalently cross-linked (Glycyl lysine isopeptide (Lys-Gly) (interchain with G-Cter in SUMO2); alternate).

In terms of assembly, trimer. Interacts with the polymerase alpha catalytic subunit POLA1. Interacts with MCM10. Interacts with DNA2. Interacts with CDC45 and GINS2 subunit of GINS complex; these interactions associate WDHD1 with the CMG helicase complex.

Its subcellular location is the nucleus. The protein localises to the nucleoplasm. Functionally, core replisome component that acts as a replication initiation factor. Binds directly to the CMG complex and functions as a hub to recruit additional proteins to the replication fork. The sequence is that of WD repeat and HMG-box DNA-binding protein 1 (Wdhd1) from Mus musculus (Mouse).